Consider the following 235-residue polypeptide: MSDLVFYDVASTGANGFDPDAGYMAFCVKYAESVNLAAVRIFFLNAAKAKAALSRKPERKANPKFGEWQVEVVNNHFPGNRNNPINSDDLTIHRLSGYLARWVLEQYKENEDESRRELIKTTIINPIAESNGVRWDSGAEIYLSFFPGTEMFLETFKFYPLTIGIYRVKQGMMDPQYLKKALRQRYGSLTADKWMSQKVTAIAKSLKEVEQLKWGRGGLSDTARSFLQKFGIRLP.

D18, A47, K50, N75, H76, R81, R94, I124, P126, E129, R167, Y177, R183, Q184, and R185 together coordinate RNA.

Belongs to the orthobunyavirus nucleocapsid protein family. Homotetramer. Binds the viral genomic RNA. Interacts with host PABP1.

Its subcellular location is the virion. Its function is as follows. Encapsidates the genome protecting it from nucleases. The encapsidated genomic RNA is termed the nucleocapsid (NC) and serves as template for transcription and replication. The NC have a helical organization. Seems to participate in the nuclear relocalization of host PABP1, thereby inhibiting host cellular translation. The chain is Nucleoprotein (N) from Aedes (Bovine).